Reading from the N-terminus, the 23-residue chain is U1-ctenitoxin-Co1a (23 aa).

Cysteine 10 and cysteine 20 are disulfide-bonded.

As to expression, expressed by the venom gland.

The protein localises to the secreted. In terms of biological role, insecticidal neurotoxin that reversibly inhibits the N-methyl-D-aspartate (NMDA)-subtype of ionotropic glutamate receptor (GRIN) and inhibits inactivation of insect sodium channels (Nav). In vivo, is highly toxic to insects. In Ctenus ornatus (Brazilian spider), this protein is U1-ctenitoxin-Co1a.